Consider the following 362-residue polypeptide: UDP-N-acetylglucosamine--N-acetylmuramyl-(pentapeptide) pyrophosphoryl-undecaprenol N-acetylglucosamine transferase (362 aa).

UDP-N-acetyl-alpha-D-glucosamine contacts are provided by residues 14–16 (TGG), N122, R163, S190, and Q285.

Belongs to the glycosyltransferase 28 family. MurG subfamily.

It localises to the cell inner membrane. The enzyme catalyses di-trans,octa-cis-undecaprenyl diphospho-N-acetyl-alpha-D-muramoyl-L-alanyl-D-glutamyl-meso-2,6-diaminopimeloyl-D-alanyl-D-alanine + UDP-N-acetyl-alpha-D-glucosamine = di-trans,octa-cis-undecaprenyl diphospho-[N-acetyl-alpha-D-glucosaminyl-(1-&gt;4)]-N-acetyl-alpha-D-muramoyl-L-alanyl-D-glutamyl-meso-2,6-diaminopimeloyl-D-alanyl-D-alanine + UDP + H(+). It participates in cell wall biogenesis; peptidoglycan biosynthesis. Functionally, cell wall formation. Catalyzes the transfer of a GlcNAc subunit on undecaprenyl-pyrophosphoryl-MurNAc-pentapeptide (lipid intermediate I) to form undecaprenyl-pyrophosphoryl-MurNAc-(pentapeptide)GlcNAc (lipid intermediate II). The polypeptide is UDP-N-acetylglucosamine--N-acetylmuramyl-(pentapeptide) pyrophosphoryl-undecaprenol N-acetylglucosamine transferase (Prochlorococcus marinus (strain MIT 9215)).